Consider the following 339-residue polypeptide: N-acetyl-gamma-glutamyl-phosphate reductase (339 aa).

Residue C145 is part of the active site.

This sequence belongs to the NAGSA dehydrogenase family. Type 1 subfamily.

It localises to the cytoplasm. It catalyses the reaction N-acetyl-L-glutamate 5-semialdehyde + phosphate + NADP(+) = N-acetyl-L-glutamyl 5-phosphate + NADPH + H(+). Its pathway is amino-acid biosynthesis; L-arginine biosynthesis; N(2)-acetyl-L-ornithine from L-glutamate: step 3/4. Catalyzes the NADPH-dependent reduction of N-acetyl-5-glutamyl phosphate to yield N-acetyl-L-glutamate 5-semialdehyde. This chain is N-acetyl-gamma-glutamyl-phosphate reductase, found in Thermotoga petrophila (strain ATCC BAA-488 / DSM 13995 / JCM 10881 / RKU-1).